Consider the following 182-residue polypeptide: MAIKTVLGEAQQIKIATDLIVLGARLQVLQEETSLSRERLLKLYKEVRGESPSKGMLPYSTDWFISWQPNIHSSLFMGIYQFMIKNAGVDGVHALISAYRLYLDQVQGIEGGEVVLSITRAWFLVRFFKAGMMQLITCRECSGKFVTHTNELHNNYVCGICHPPARAGKTNAKARLLAGHAE.

Positions 138, 141, 158, and 161 each coordinate Zn(2+).

Belongs to the FlhC family. As to quaternary structure, heterohexamer composed of two FlhC and four FlhD subunits. Each FlhC binds a FlhD dimer, forming a heterotrimer, and a hexamer assembles by dimerization of two heterotrimers. Zn(2+) is required as a cofactor.

The protein localises to the cytoplasm. Its function is as follows. Functions in complex with FlhD as a master transcriptional regulator that regulates transcription of several flagellar and non-flagellar operons by binding to their promoter region. Activates expression of class 2 flagellar genes, including fliA, which is a flagellum-specific sigma factor that turns on the class 3 genes. Also regulates genes whose products function in a variety of physiological pathways. The sequence is that of Flagellar transcriptional regulator FlhC from Gallionella capsiferriformans (strain ES-2) (Gallionella ferruginea capsiferriformans (strain ES-2)).